The following is a 169-amino-acid chain: uncharacterized protein (169 aa).

The protein to M.tuberculosis Rv1480.

This is an uncharacterized protein from Mycobacterium avium.